The chain runs to 313 residues: Ribonuclease HIII (313 aa).

A disordered region spans residues 63 to 85; the sequence is ARWGTAEPQEKKKTAKKPADPRY. Over residues 70-82 the composition is skewed to basic and acidic residues; that stretch reads PQEKKKTAKKPAD. The region spanning 94-310 is the RNase H type-2 domain; sequence MSVIGSDEVG…TQKAQRLADK (217 aa). Residues Asp-100, Glu-101, and Asp-205 each contribute to the a divalent metal cation site.

It belongs to the RNase HII family. RnhC subfamily. Interacts with the RNA polymerase core. The cofactor is Mn(2+). Requires Mg(2+) as cofactor.

It is found in the cytoplasm. The catalysed reaction is Endonucleolytic cleavage to 5'-phosphomonoester.. Endonuclease that specifically degrades the RNA of RNA-DNA hybrids. The chain is Ribonuclease HIII (rnhC) from Bacillus subtilis (strain 168).